We begin with the raw amino-acid sequence, 110 residues long: Thioredoxin (110 aa).

The Thioredoxin domain maps to 2–110; sequence SALLVEIDKD…IDAMIAKHVG (109 aa). A disulfide bridge connects residues cysteine 33 and cysteine 36.

Belongs to the thioredoxin family.

Functionally, participates in various redox reactions through the reversible oxidation of its active center dithiol to a disulfide and catalyzes dithiol-disulfide exchange reactions. This Peptoclostridium acidaminophilum (Eubacterium acidaminophilum) protein is Thioredoxin (trxA).